The primary structure comprises 788 residues: Glucan 1,3-beta-glucosidase (788 aa).

Positions 1–42 (MRFSSLLACLGAVGIQAAAIPFQRRVDNTTDSGSLDAAQAAA) are cleaved as a signal peptide. Residues Asn28, Asn233, Asn381, and Asn773 are each glycosylated (N-linked (GlcNAc...) asparagine).

It belongs to the glycosyl hydrolase 55 family.

It catalyses the reaction Successive hydrolysis of beta-D-glucose units from the non-reducing ends of (1-&gt;3)-beta-D-glucans, releasing alpha-glucose.. The polypeptide is Glucan 1,3-beta-glucosidase (EXG1) (Cochliobolus carbonum (Maize leaf spot fungus)).